The following is a 478-amino-acid chain: Sphingomyelin synthase-related protein 1 (478 aa).

The span at M1–L22 shows a compositional bias: low complexity. A disordered region spans residues M1–A65. An SAM domain is found at W75–I141. 6 helical membrane passes run I216–V236, F264–L284, L295–L315, A341–F361, F385–H405, and I410–A430. Residues N431 to G478 are Cytoplasmic-facing.

The protein belongs to the sphingomyelin synthase family. As to expression, expressed ubiquitously with highest levels in macrophages and testis.

Its subcellular location is the endoplasmic reticulum membrane. The catalysed reaction is an N-acylsphing-4-enine + a 1,2-diacyl-sn-glycero-3-phosphoethanolamine = an N-acylsphing-4-enine 1-phosphoethanolamine + a 1,2-diacyl-sn-glycerol. It catalyses the reaction an N-acylsphinganine + a 1,2-diacyl-sn-glycero-3-phosphoethanolamine = an N-acylsphinganine-1-phosphoethanolamine + a 1,2-diacyl-sn-glycerol. It carries out the reaction an N-acyl-(4R)-4-hydroxysphinganine + a 1,2-diacyl-sn-glycero-3-phosphoethanolamine = an N-acyl-(4R)-4-hydroxysphinganine-1-phosphoethanolamine + a 1,2-diacyl-sn-glycerol. The enzyme catalyses N-hexadecanoylsphinganine + a 1,2-diacyl-sn-glycero-3-phosphoethanolamine = N-hexadecanoyl-sphinganine-1-phosphoethanolamine + a 1,2-diacyl-sn-glycerol. The catalysed reaction is N-hexadecanoyl-(4R)-hydroxysphinganine + a 1,2-diacyl-sn-glycero-3-phosphoethanolamine = N-hexadecanoyl-(4R)-hydroxysphinganine-1-phosphoethanolamine + a 1,2-diacyl-sn-glycerol. Its pathway is sphingolipid metabolism. Functionally, synthesizes sphingolipids through transfer of a phosphatidyl head group from a glycerophospholipid on to the primary hydroxyl of a ceramide in the lumen of the endoplasmic reticulum. Catalyzes the synthesis of ceramide phosphoethanolamines (CPEs) (such as N-acylsphing-4-enine 1-phosphoethanolamine) by transferring phosphoethanolamine head group, which is smaller and more hydrophilic than the phosphocholine (PC) headgroup transferred in the canonical sphingomyelin synthesis (SMS) reaction by SMS1 or SMS2, from a phosphatidylethanolamine (1,2-diacyl-sn-glycero-3-phosphoethanolamine, PE) to a ceramide (such as N-acylsphing-4-enine). The larger PC prevents an efficient fit in the enzyme's catalytic pocket, leading to little or no SMS activity. In vitro, in the absence of ceramide, it has PLC activity with preference for phosphatidylinositol and phosphatidic acid, but also hydrolyzes phosphatidylethanolamine. This chain is Sphingomyelin synthase-related protein 1, found in Mus musculus (Mouse).